Here is a 620-residue protein sequence, read N- to C-terminus: 1-deoxy-D-xylulose-5-phosphate synthase (620 aa).

Thiamine diphosphate-binding positions include histidine 80 and 121–123 (GHS). Aspartate 152 contributes to the Mg(2+) binding site. Thiamine diphosphate-binding positions include 153–154 (GA), asparagine 181, tyrosine 288, and glutamate 370. Mg(2+) is bound at residue asparagine 181.

Belongs to the transketolase family. DXPS subfamily. As to quaternary structure, homodimer. Requires Mg(2+) as cofactor. Thiamine diphosphate is required as a cofactor.

It carries out the reaction D-glyceraldehyde 3-phosphate + pyruvate + H(+) = 1-deoxy-D-xylulose 5-phosphate + CO2. It participates in metabolic intermediate biosynthesis; 1-deoxy-D-xylulose 5-phosphate biosynthesis; 1-deoxy-D-xylulose 5-phosphate from D-glyceraldehyde 3-phosphate and pyruvate: step 1/1. Catalyzes the acyloin condensation reaction between C atoms 2 and 3 of pyruvate and glyceraldehyde 3-phosphate to yield 1-deoxy-D-xylulose-5-phosphate (DXP). The protein is 1-deoxy-D-xylulose-5-phosphate synthase of Klebsiella pneumoniae (strain 342).